Consider the following 618-residue polypeptide: Chaperone protein dnaK (618 aa).

The interval 595–618 is disordered; sequence SKTETTTPNKNEEDVIDASFSEEK.

This sequence belongs to the heat shock protein 70 family.

Its subcellular location is the plastid. It is found in the cyanelle. Its function is as follows. Acts as a chaperone. The protein is Chaperone protein dnaK (dnaK-A) of Cyanophora paradoxa.